Reading from the N-terminus, the 473-residue chain is uncharacterized protein (473 aa).

Residues 1 to 86 form a disordered region; that stretch reads MSSSPTESEI…NTSNYGSSRD (86 aa). Basic and acidic residues predominate over residues 10 to 19; it reads ILPKESHNSI. 2 stretches are compositionally biased toward polar residues: residues 20–39 and 55–68; these read DEQS…NSFN and EPVQ…PNMA. A Phosphoserine modification is found at Ser64. The segment covering 69 to 83 has biased composition (low complexity); sequence SNESGNSENTSNYGS. RRM domains are found at residues 95–165, 188–260, and 305–370; these read LWMG…NHLF, IFVG…PIRV, and VFVG…RIRL. Residues 448–473 form a disordered region; it reads MHIPENGNSDTMPVPNTQGKHLSAEE. Residues 453–467 show a composition bias toward polar residues; the sequence is NGNSDTMPVPNTQGK.

This is an uncharacterized protein from Schizosaccharomyces pombe (strain 972 / ATCC 24843) (Fission yeast).